Here is a 248-residue protein sequence, read N- to C-terminus: Protein maestro (248 aa).

The tract at residues Met1–Arg23 is disordered. Residues Ser128 to Ala163 form an HEAT repeat.

Prominent expression seen in testis, brain, liver and heart. Weakly expressed in the kidney.

The protein resides in the nucleus. Its subcellular location is the nucleolus. The sequence is that of Protein maestro (Mro) from Mus musculus (Mouse).